The following is an 85-amino-acid chain: Large ribosomal subunit protein bL27 (85 aa).

The disordered stretch occupies residues 1 to 22 (MAHKKAGGSTRNGRDSEAKRMG).

This sequence belongs to the bacterial ribosomal protein bL27 family.

In Escherichia coli O6:K15:H31 (strain 536 / UPEC), this protein is Large ribosomal subunit protein bL27.